Consider the following 396-residue polypeptide: Elongation factor Tu (396 aa).

The 197-residue stretch at 10-206 (KPHVNVGTIG…ALDSYIPEPE (197 aa)) folds into the tr-type G domain. Residues 19-26 (GHVDHGKT) are G1. 19 to 26 (GHVDHGKT) contributes to the GTP binding site. Mg(2+) is bound at residue threonine 26. Residues 60-64 (GITIN) are G2. Positions 81–84 (DCPG) are G3. GTP is bound by residues 81-85 (DCPGH) and 136-139 (NKAD). Residues 136-139 (NKAD) form a G4 region. Residues 174 to 176 (SAL) form a G5 region.

Belongs to the TRAFAC class translation factor GTPase superfamily. Classic translation factor GTPase family. EF-Tu/EF-1A subfamily. As to quaternary structure, monomer.

The protein localises to the cytoplasm. The catalysed reaction is GTP + H2O = GDP + phosphate + H(+). Its function is as follows. GTP hydrolase that promotes the GTP-dependent binding of aminoacyl-tRNA to the A-site of ribosomes during protein biosynthesis. This is Elongation factor Tu from Nitrosomonas europaea (strain ATCC 19718 / CIP 103999 / KCTC 2705 / NBRC 14298).